A 657-amino-acid polypeptide reads, in one-letter code: Regulator of MON1-CCZ1 complex (657 aa).

One can recognise a Mic1 domain in the interval 471–637 (NKEMPHKFVI…NFTPGEHCEE (167 aa)).

This sequence belongs to the RMC1 family. As to quaternary structure, found in a complex with RMC1, CCZ1, MON1A and MON1B. Highly expressed in heart, brain, spleen, lung, liver, skeletal muscle, kidney and testis.

The protein localises to the lysosome membrane. It localises to the late endosome membrane. In terms of biological role, component of the CCZ1-MON1 RAB7A guanine exchange factor (GEF). Acts as a positive regulator of CCZ1-MON1A/B function necessary for endosomal/autophagic flux and efficient RAB7A localization. The polypeptide is Regulator of MON1-CCZ1 complex (Rmc1) (Mus musculus (Mouse)).